The following is a 794-amino-acid chain: Protein sel-1 homolog 1 (794 aa).

The N-terminal stretch at 1–21 is a signal peptide; sequence MRVRIGLTLLLCAVLLSLASA. The tract at residues 21-50 is disordered; the sequence is ASSDEEGSQDESLDSKTTLTSDESVKDHTT. The interval 22 to 737 is interaction with ERLEC1, OS9 and SYVN1; that stretch reads SSDEEGSQDE…DMFTQLDMDQ (716 aa). The Lumenal segment spans residues 22 to 738; the sequence is SSDEEGSQDE…MFTQLDMDQL (717 aa). The span at 23 to 32 shows a compositional bias: acidic residues; it reads SDEEGSQDES. Residue Ser63 is modified to Phosphoserine. Acidic residues predominate over residues 64 to 77; sequence EESELESSIQEEED. Residues 64–109 form a disordered region; sequence EESELESSIQEEEDSLKSQEGESVTEDISFLESPNPENKDYEEPKK. The 49-residue stretch at 122–170 folds into the Fibronectin type-II domain; that stretch reads AHGEPCHFPFLFLDKEYDECTSDGREDGRLWCATTYDYKADEKWGFCET. Disulfide bonds link Cys127–Cys153 and Cys141–Cys168. 9 Sel1-like repeats span residues 183-218, 219-254, 255-290, 291-326, 373-409, 410-446, 447-482, 483-518, and 519-554; these read AEMM…SMNH, TKAL…EEGS, PKGQ…LGGN, LIAH…NHVA, VQAQ…NAGN, SHAM…DMGN, PVGQ…EQGW, VDGQ…QGGH, and ILAF…ERGR. Asn195 and Asn217 each carry an N-linked (GlcNAc...) asparagine glycan. Asn272 carries N-linked (GlcNAc...) asparagine glycosylation. The important for homodimerization and oligomerization stretch occupies residues 352-537; the sequence is NSGMLEEDLI…MHASGTGVMR (186 aa). N-linked (GlcNAc...) asparagine glycosylation is present at Asn431. An N-linked (GlcNAc...) asparagine glycan is attached at Asn608. 2 Sel1-like repeats span residues 627-662 and 664-699; these read TVAR…EQQH and AQAM…EASP. Residues 643–723 are interaction with SYVN1; that stretch reads TDVDYETAFI…VVYFLQYIRE (81 aa). Residues 738–794 form a mediates retention in the endoplasmic reticulum region; the sequence is LLGPEWDLYLMTIIALLLGTVIAYRQRQHQDMPAPRPPGPRPAPPQQEGPPEQQPPQ. Residues 739-759 form a helical membrane-spanning segment; that stretch reads LGPEWDLYLMTIIALLLGTVI. Residues 760-794 are Cytoplasmic-facing; sequence AYRQRQHQDMPAPRPPGPRPAPPQQEGPPEQQPPQ. The disordered stretch occupies residues 766–794; it reads HQDMPAPRPPGPRPAPPQQEGPPEQQPPQ. The span at 771-794 shows a compositional bias: pro residues; sequence APRPPGPRPAPPQQEGPPEQQPPQ.

This sequence belongs to the sel-1 family. As to quaternary structure, homodimer and homooligomer. May form a complex with ERLEC1, HSPA5, OS9, and SYVN1. Interacts with FOXRED2 and EDEM1. Interacts with LPL. Interacts with LMF1; may stabilize the complex formed by LPL and LMF1 and thereby promote the export of LPL dimers. Component of the HRD1 complex, which comprises at least SYNV1/HRD1, DERL1/2, FAM8A1, HERPUD1/HERP, OS9, SEL1L and UBE2J1. SYNV1 assembles with SEL1L and FAM8A1 through its transmembrane domains, but interaction with its cytoplasmic domain is required to confer stability to FAM8A1 and enhance recruitment of HERPUD1. The interaction with SYNV1/HRD1 is direct. (Microbial infection) Interacts with human cytomegalovirus protein UL148. In terms of processing, N-glycosylated. Highly expressed in pancreas.

It localises to the endoplasmic reticulum membrane. Its function is as follows. Plays a role in the endoplasmic reticulum quality control (ERQC) system also called ER-associated degradation (ERAD) involved in ubiquitin-dependent degradation of misfolded endoplasmic reticulum proteins. Enhances SYVN1 stability. Plays a role in LPL maturation and secretion. Required for normal differentiation of the pancreas epithelium, and for normal exocrine function and survival of pancreatic cells. May play a role in Notch signaling. The polypeptide is Protein sel-1 homolog 1 (Homo sapiens (Human)).